Here is a 469-residue protein sequence, read N- to C-terminus: Phosphoenolpyruvate carboxylase (469 aa).

It belongs to the PEPCase type 2 family. In terms of assembly, homotetramer. The cofactor is Mg(2+).

The catalysed reaction is oxaloacetate + phosphate = phosphoenolpyruvate + hydrogencarbonate. Its function is as follows. Catalyzes the irreversible beta-carboxylation of phosphoenolpyruvate (PEP) to form oxaloacetate (OAA), a four-carbon dicarboxylic acid source for the tricarboxylic acid cycle. This chain is Phosphoenolpyruvate carboxylase, found in Pyrococcus horikoshii (strain ATCC 700860 / DSM 12428 / JCM 9974 / NBRC 100139 / OT-3).